A 325-amino-acid polypeptide reads, in one-letter code: MPSGCGDDADSTGNALRRLPHVRKRIGKRKHLDIYRRLLRVFPSFVALNRLLGGLFPPELQKYRRRLFIEVRLSRRIPDCVLVFLPPDSGSRGIVYCYVIEFKTTYSDADDQSVRWHATHSLQYAEGLRQLKGALVDFDFLRLPRGGGQVWSVVPSLVFFQQKADRPSFYRAFRSGRFDLCTDSVLDYLGRRQDESVAHLLAATRRRLLRAARGKRAALPRARASAVAGGRGGGNARRGLARGRAHGPGAQTVSASGAEGSGSQGTDLLRGSRRARVRGGGAVEPAVRARRRTVAADAATTTVSSAFVVPRDRRGRSFRRPTRSL.

Positions 222–286 are disordered; sequence ARASAVAGGR…VRGGGAVEPA (65 aa). Over residues 247-258 the composition is skewed to low complexity; that stretch reads GPGAQTVSASGA.

The protein belongs to the herpesviridae UL24 family.

It is found in the virion. The protein resides in the host cytoplasm. It localises to the host nucleus. The protein localises to the host nucleolus. Its subcellular location is the host Golgi apparatus. May participate in nuclear egress of viral particles. Plays a role in the dispersal of several host nucleolar proteins including NCL/nucleolin and NPM1. Since deletion of host NCL/nucleolin negatively impact on nuclear egress, UL76 supposedly acts on this process through its effect on host nucleoli. Induces cell cycle arrest in host cells at the G2/M phase following by apoptosis. The mechanism involves the inhibition of host mitotic complex cyclinB/CDK1. This is Protein UL76 (UL76) from Human cytomegalovirus (strain Merlin) (HHV-5).